The chain runs to 49 residues: Single-stranded DNA-binding protein (49 aa).

In terms of assembly, homodimer in the absence of DNA, monomer when binding DNA.

Binds preferentially to single-stranded DNA and therefore, destabilizes double-stranded DNA. It is involved in DNA replication, repair and recombination. Binds ss-DNA as the replication fork advances and stimulates the replisome processivity and accuracy. This chain is Single-stranded DNA-binding protein (32), found in Enterobacteria phage RB9 (Bacteriophage RB9).